The sequence spans 217 residues: MSMTEQEARAWIEGRVPRGTMAGLEKLVAMILDEMPRQNLIAASTAESIWTRHIVDSAQLVPMVGKGGPLRWIDLGSGAGFPGMVVALMLPELRMTLVESRRKRIDFLRFMAESLGIADRVTVAGQRLEMLESSPHDVISARAFAPLDRLLPLAHRFSHDATLWLLPKGRSAASELEAVTTSWQGDFRVVPSMTDPEAAIIVASQVQPRGKGQKGRR.

Residues Gly76, Phe81, 128-129 (LE), and Arg142 contribute to the S-adenosyl-L-methionine site.

The protein belongs to the methyltransferase superfamily. RNA methyltransferase RsmG family.

It is found in the cytoplasm. The enzyme catalyses guanosine(527) in 16S rRNA + S-adenosyl-L-methionine = N(7)-methylguanosine(527) in 16S rRNA + S-adenosyl-L-homocysteine. Specifically methylates the N7 position of guanine in position 527 of 16S rRNA. The protein is Ribosomal RNA small subunit methyltransferase G of Rhizorhabdus wittichii (strain DSM 6014 / CCUG 31198 / JCM 15750 / NBRC 105917 / EY 4224 / RW1) (Sphingomonas wittichii).